The primary structure comprises 243 residues: MTDQEHSASEENADSVEKHKYMRKIRSFVKREGRMTNRQQTAIDTLWDTMGIDFEEKLIDFNALFGRQAPIVLEIGFGMGKSLIEMAKNAPEKNFIGIEVHGPGVGACLADAGEAGVTNLRVINHDAVEVLDKMIPDNSLAVFQLYFPDPWHKARHHKRRIVQPHFIENMRHKLAIGGVIHMATDWENYAEHMLAVLQASPDFKNTSESDYAPRPEWRPLTKFENRGNNLGHGVWDLLFERIS.

S-adenosyl-L-methionine is bound by residues glutamate 74, glutamate 99, aspartate 126, and aspartate 149. Residue aspartate 149 is part of the active site. Substrate contacts are provided by residues lysine 153, aspartate 185, and 221–224 (TKFE).

Belongs to the class I-like SAM-binding methyltransferase superfamily. TrmB family.

The enzyme catalyses guanosine(46) in tRNA + S-adenosyl-L-methionine = N(7)-methylguanosine(46) in tRNA + S-adenosyl-L-homocysteine. Its pathway is tRNA modification; N(7)-methylguanine-tRNA biosynthesis. Functionally, catalyzes the formation of N(7)-methylguanine at position 46 (m7G46) in tRNA. This Psychromonas ingrahamii (strain DSM 17664 / CCUG 51855 / 37) protein is tRNA (guanine-N(7)-)-methyltransferase.